Here is a 278-residue protein sequence, read N- to C-terminus: 2-dehydro-3-deoxyphosphooctonate aldolase (278 aa).

The protein belongs to the KdsA family.

It is found in the cytoplasm. The enzyme catalyses D-arabinose 5-phosphate + phosphoenolpyruvate + H2O = 3-deoxy-alpha-D-manno-2-octulosonate-8-phosphate + phosphate. Its pathway is carbohydrate biosynthesis; 3-deoxy-D-manno-octulosonate biosynthesis; 3-deoxy-D-manno-octulosonate from D-ribulose 5-phosphate: step 2/3. The protein operates within bacterial outer membrane biogenesis; lipopolysaccharide biosynthesis. The polypeptide is 2-dehydro-3-deoxyphosphooctonate aldolase (Dechloromonas aromatica (strain RCB)).